Here is a 684-residue protein sequence, read N- to C-terminus: Sec1 family domain-containing protein 2 (684 aa).

Belongs to the STXBP/unc-18/SEC1 family.

Its function is as follows. May be involved in protein transport. The chain is Sec1 family domain-containing protein 2 (SCFD2) from Homo sapiens (Human).